The sequence spans 379 residues: Homoserine O-succinyltransferase (379 aa).

Residues 51-360 (NAVLICHALS…DAPQGHDAFL (310 aa)) form the AB hydrolase-1 domain. The active-site Nucleophile is the Ser157. Position 227 (Arg227) interacts with substrate. Residues Asp323 and His356 contribute to the active site. Asp357 contacts substrate.

This sequence belongs to the AB hydrolase superfamily. MetX family. As to quaternary structure, homodimer.

Its subcellular location is the cytoplasm. The catalysed reaction is L-homoserine + succinyl-CoA = O-succinyl-L-homoserine + CoA. Its pathway is amino-acid biosynthesis; L-methionine biosynthesis via de novo pathway; O-succinyl-L-homoserine from L-homoserine: step 1/1. Functionally, transfers a succinyl group from succinyl-CoA to L-homoserine, forming succinyl-L-homoserine. The protein is Homoserine O-succinyltransferase of Pseudomonas fluorescens (strain ATCC BAA-477 / NRRL B-23932 / Pf-5).